Here is a 136-residue protein sequence, read N- to C-terminus: Beta-hordothionin (136 aa).

The first 27 residues, 1 to 27 (MGSKGLKGVMVCLLILGLVLEHVQVEG), serve as a signal peptide directing secretion. Intrachain disulfides connect C30-C66, C31-C58, C39-C56, and C43-C52. Positions 73–136 (LALVSNSDEP…GDVGLTSLTA (64 aa)) are cleaved as a propeptide — acidic domain.

This sequence belongs to the plant thionin (TC 1.C.44) family. 4 C-C subfamily. In terms of assembly, homodimer.

Its subcellular location is the secreted. In terms of biological role, thionins are small plant proteins which are toxic to animal cells. They seem to exert their toxic effect at the level of the cell membrane. Their precise function is not known. In Hordeum vulgare (Barley), this protein is Beta-hordothionin (THI1.2).